The primary structure comprises 450 residues: Phosphoglucosamine mutase (450 aa).

The active-site Phosphoserine intermediate is the Ser-101. Residues Ser-101, Asp-242, Asp-244, and Asp-246 each coordinate Mg(2+). Ser-101 carries the phosphoserine modification.

Belongs to the phosphohexose mutase family. Mg(2+) serves as cofactor. In terms of processing, activated by phosphorylation.

The catalysed reaction is alpha-D-glucosamine 1-phosphate = D-glucosamine 6-phosphate. Catalyzes the conversion of glucosamine-6-phosphate to glucosamine-1-phosphate. This Rhodopseudomonas palustris (strain ATCC BAA-98 / CGA009) protein is Phosphoglucosamine mutase.